The primary structure comprises 969 residues: RNA polymerase-associated protein RapA (969 aa).

The Helicase ATP-binding domain occupies 162–339; that stretch reads EVGQRVAPRV…FARLALLDAD (178 aa). 175-182 is an ATP binding site; the sequence is DEVGLGKT. Positions 285 to 288 match the DEAH box motif; the sequence is DEAH. Residues 492–663 enclose the Helicase C-terminal domain; sequence RIEWLITFLK…GFLKNPQAVG (172 aa).

This sequence belongs to the SNF2/RAD54 helicase family. RapA subfamily. Interacts with the RNAP. Has a higher affinity for the core RNAP than for the holoenzyme. Its ATPase activity is stimulated by binding to RNAP.

Transcription regulator that activates transcription by stimulating RNA polymerase (RNAP) recycling in case of stress conditions such as supercoiled DNA or high salt concentrations. Probably acts by releasing the RNAP, when it is trapped or immobilized on tightly supercoiled DNA. Does not activate transcription on linear DNA. Probably not involved in DNA repair. The chain is RNA polymerase-associated protein RapA from Actinobacillus pleuropneumoniae serotype 7 (strain AP76).